Consider the following 317-residue polypeptide: Putative ribose-phosphate pyrophosphokinase (317 aa).

The segment at 211 to 224 (GRDVIVLDDEIAKG) is binding of phosphoribosylpyrophosphate.

It belongs to the ribose-phosphate pyrophosphokinase family.

It carries out the reaction D-ribose 5-phosphate + ATP = 5-phospho-alpha-D-ribose 1-diphosphate + AMP + H(+). The chain is Putative ribose-phosphate pyrophosphokinase from Streptomyces coelicolor (strain ATCC BAA-471 / A3(2) / M145).